The sequence spans 357 residues: UDP-N-acetylglucosamine--N-acetylmuramyl-(pentapeptide) pyrophosphoryl-undecaprenol N-acetylglucosamine transferase (357 aa).

Residues 12-14 (TGG), N124, R163, S189, I243, 262-267 (ALTVSE), and Q288 each bind UDP-N-acetyl-alpha-D-glucosamine.

Belongs to the glycosyltransferase 28 family. MurG subfamily.

The protein resides in the cell inner membrane. It carries out the reaction di-trans,octa-cis-undecaprenyl diphospho-N-acetyl-alpha-D-muramoyl-L-alanyl-D-glutamyl-meso-2,6-diaminopimeloyl-D-alanyl-D-alanine + UDP-N-acetyl-alpha-D-glucosamine = di-trans,octa-cis-undecaprenyl diphospho-[N-acetyl-alpha-D-glucosaminyl-(1-&gt;4)]-N-acetyl-alpha-D-muramoyl-L-alanyl-D-glutamyl-meso-2,6-diaminopimeloyl-D-alanyl-D-alanine + UDP + H(+). It functions in the pathway cell wall biogenesis; peptidoglycan biosynthesis. Functionally, cell wall formation. Catalyzes the transfer of a GlcNAc subunit on undecaprenyl-pyrophosphoryl-MurNAc-pentapeptide (lipid intermediate I) to form undecaprenyl-pyrophosphoryl-MurNAc-(pentapeptide)GlcNAc (lipid intermediate II). This Pseudomonas paraeruginosa (strain DSM 24068 / PA7) (Pseudomonas aeruginosa (strain PA7)) protein is UDP-N-acetylglucosamine--N-acetylmuramyl-(pentapeptide) pyrophosphoryl-undecaprenol N-acetylglucosamine transferase.